The following is a 1140-amino-acid chain: Squamosa promoter-binding-like protein 15 (1140 aa).

Disordered stretches follow at residues 73–112 (RVNA…LNLQ) and 124–177 (DVSP…GGNS). 2 stretches are compositionally biased toward low complexity: residues 76-100 (AGLS…EALR) and 125-135 (VSPAATTVSSS). A compositionally biased stretch (gly residues) spans 164 to 177 (ASGGGGGGGGGGNS). The SBP-type zinc finger occupies 184 to 261 (YPMCQVDDCR…AGHNRRRRKT (78 aa)). Zn(2+)-binding residues include Cys187, Cys192, Cys209, His212, Cys228, Cys231, His235, and Cys247. The short motif at 244 to 260 (KRSCRRRLAGHNRRRRK) is the Bipartite nuclear localization signal element. Disordered stretches follow at residues 327–382 (NNGN…ADGF), 403–472 (TSNP…TPPY), 496–517 (LSSE…PVTH), and 558–597 (KDSE…DGQD). A compositionally biased stretch (polar residues) spans 345 to 375 (ASHSQQQDSVQRTTNGFEKQTNGLDKQTNGF). The segment covering 403 to 430 (TSNPDSNTSQSQGSSDSSGNNKSKSQST) has biased composition (low complexity). Residues 450 to 466 (RKNDALERSPEMYKQPD) are compositionally biased toward basic and acidic residues. Over residues 496-514 (LSSESSNPLDERSPSSSPP) the composition is skewed to polar residues. The segment covering 579–593 (TSTSCSDHSPSTSNS) has biased composition (low complexity).

Expressed in stems, leaf sheaths, and young panicles.

It localises to the nucleus. Its function is as follows. Trans-acting factor that binds specifically to the consensus nucleotide sequence 5'-TNCGTACAA-3'. The sequence is that of Squamosa promoter-binding-like protein 15 (SPL15) from Oryza sativa subsp. indica (Rice).